The following is a 213-amino-acid chain: MAMWSLRRKSSRSVQLRVDSPKEQSYDILSAGGEHVALLPKSVRSLARTILTAATISQAAMKAGKPPSSRLWGEIFDRMTVTLNEYDISASPFHPTDPTRKIVGRALRCIERAPLTHEEMDTRFTIMMYWCCLGHAGYCTVSRLYEKNVRLMDIVGSATGCGISPLPEIESYWKPLCRAVATKGNAAIGDDAELAHYLTNLRESPTGDGESYL.

It belongs to the herpesviridae US10 family. In terms of processing, phosphorylated.

Its subcellular location is the virion tegument. It localises to the host nucleus matrix. The sequence is that of Virion protein US10 homolog (US639) from Gallid herpesvirus 2 (strain GA) (GaHV-2).